The chain runs to 601 residues: Chaperone protein DnaK (601 aa).

Thr175 carries the post-translational modification Phosphothreonine; by autocatalysis. The segment at 570-601 (FAQKAASKETSKNEQNEDGSIDAEIKEEDPKA) is disordered. Positions 575–584 (ASKETSKNEQ) are enriched in basic and acidic residues. Acidic residues predominate over residues 585-601 (NEDGSIDAEIKEEDPKA).

The protein belongs to the heat shock protein 70 family.

Acts as a chaperone. This Mycoplasma mobile (strain ATCC 43663 / 163K / NCTC 11711) (Mesomycoplasma mobile) protein is Chaperone protein DnaK.